Consider the following 513-residue polypeptide: Cytochrome P450 1A2 (513 aa).

Ser68 is a glycosylation site (O-linked (GlcNAc) serine). Phe225 lines the substrate pocket. Cys456 is a binding site for heme.

It belongs to the cytochrome P450 family. Interacts with PGRMC1; the interaction requires PGRMC1 homodimerization. Requires heme as cofactor.

The protein localises to the endoplasmic reticulum membrane. It is found in the microsome membrane. The catalysed reaction is an organic molecule + reduced [NADPH--hemoprotein reductase] + O2 = an alcohol + oxidized [NADPH--hemoprotein reductase] + H2O + H(+). It catalyses the reaction 17beta-estradiol + reduced [NADPH--hemoprotein reductase] + O2 = 2-hydroxy-17beta-estradiol + oxidized [NADPH--hemoprotein reductase] + H2O + H(+). The enzyme catalyses 17beta-estradiol + reduced [NADPH--hemoprotein reductase] + O2 = 4-hydroxy-17beta-estradiol + oxidized [NADPH--hemoprotein reductase] + H2O + H(+). It carries out the reaction estrone + reduced [NADPH--hemoprotein reductase] + O2 = 2-hydroxyestrone + oxidized [NADPH--hemoprotein reductase] + H2O + H(+). The catalysed reaction is estrone + reduced [NADPH--hemoprotein reductase] + O2 = 4-hydroxyestrone + oxidized [NADPH--hemoprotein reductase] + H2O + H(+). It catalyses the reaction cholesterol + reduced [NADPH--hemoprotein reductase] + O2 = 25-hydroxycholesterol + oxidized [NADPH--hemoprotein reductase] + H2O + H(+). The enzyme catalyses all-trans-retinol + reduced [NADPH--hemoprotein reductase] + O2 = all-trans-retinal + oxidized [NADPH--hemoprotein reductase] + 2 H2O + H(+). It carries out the reaction all-trans-retinal + reduced [NADPH--hemoprotein reductase] + O2 = all-trans-retinoate + oxidized [NADPH--hemoprotein reductase] + H2O + 2 H(+). The catalysed reaction is (5Z,8Z,11Z,14Z)-eicosatetraenoate + reduced [NADPH--hemoprotein reductase] + O2 = (14R,15S)-epoxy-(5Z,8Z,11Z)-eicosatrienoate + oxidized [NADPH--hemoprotein reductase] + H2O + H(+). It catalyses the reaction (5Z,8Z,11Z,14Z)-eicosatetraenoate + reduced [NADPH--hemoprotein reductase] + O2 = (14S,15R)-epoxy-(5Z,8Z,11Z)-eicosatrienoate + oxidized [NADPH--hemoprotein reductase] + H2O + H(+). The enzyme catalyses (5Z,8Z,11Z,14Z,17Z)-eicosapentaenoate + reduced [NADPH--hemoprotein reductase] + O2 = (17R,18S)-epoxy-(5Z,8Z,11Z,14Z)-eicosatetraenoate + oxidized [NADPH--hemoprotein reductase] + H2O + H(+). It carries out the reaction (4Z,7Z,10Z,13Z,16Z,19Z)-docosahexaenoate + reduced [NADPH--hemoprotein reductase] + O2 = (19R,20S)-epoxy-(4Z,7Z,10Z,13Z,16Z)-docosapentaenoate + oxidized [NADPH--hemoprotein reductase] + H2O + H(+). The catalysed reaction is (5S)-hydroperoxy-(6E,8Z,11Z,14Z)-eicosatetraenoate = 5-oxo-(6E,8Z,11Z,14Z)-eicosatetraenoate + H2O. It catalyses the reaction (12S)-hydroperoxy-(5Z,8Z,10E,14Z)-eicosatetraenoate = 12-oxo-(5Z,8Z,10E,14Z)-eicosatetraenoate + H2O. The enzyme catalyses (15S)-hydroperoxy-(5Z,8Z,11Z,13E)-eicosatetraenoate = 15-oxo-(5Z,8Z,11Z,13E)-eicosatetraenoate + H2O. It carries out the reaction (13S)-hydroperoxy-(9Z,11E)-octadecadienoate = 13-oxo-(9Z,11E)-octadecadienoate + H2O. The catalysed reaction is (5Z,8Z,11Z,14Z)-eicosatetraenoate + reduced [NADPH--hemoprotein reductase] + O2 = 13-hydroxy-(5Z,8Z,11Z,14Z)-eicosatetraenoate + oxidized [NADPH--hemoprotein reductase] + H2O + H(+). It catalyses the reaction (5Z,8Z,11Z,14Z)-eicosatetraenoate + reduced [NADPH--hemoprotein reductase] + O2 = 19-hydroxy-(5Z,8Z,11Z,14Z)-eicosatetraenoate + oxidized [NADPH--hemoprotein reductase] + H2O + H(+). The enzyme catalyses (9Z,12Z)-octadecadienoate + reduced [NADPH--hemoprotein reductase] + O2 = 11-hydroxy-(9Z,12Z)-octadecadienoate + oxidized [NADPH--hemoprotein reductase] + H2O + H(+). The protein operates within cofactor metabolism; retinol metabolism. It participates in steroid metabolism; cholesterol metabolism. It functions in the pathway lipid metabolism; arachidonate metabolism. In terms of biological role, a cytochrome P450 monooxygenase involved in the metabolism of various endogenous substrates, including fatty acids, steroid hormones and vitamins. Mechanistically, uses molecular oxygen inserting one oxygen atom into a substrate, and reducing the second into a water molecule, with two electrons provided by NADPH via cytochrome P450 reductase (NADPH--hemoprotein reductase). Catalyzes the hydroxylation of carbon-hydrogen bonds. Exhibits high catalytic activity for the formation of hydroxyestrogens from estrone (E1) and 17beta-estradiol (E2), namely 2-hydroxy E1 and E2. Metabolizes cholesterol toward 25-hydroxycholesterol, a physiological regulator of cellular cholesterol homeostasis. May act as a major enzyme for all-trans retinoic acid biosynthesis in the liver. Catalyzes two successive oxidative transformation of all-trans retinol to all-trans retinal and then to the active form all-trans retinoic acid. Primarily catalyzes stereoselective epoxidation of the last double bond of polyunsaturated fatty acids (PUFA), displaying a strong preference for the (R,S) stereoisomer. Catalyzes bisallylic hydroxylation and omega-1 hydroxylation of PUFA. May also participate in eicosanoids metabolism by converting hydroperoxide species into oxo metabolites (lipoxygenase-like reaction, NADPH-independent). Plays a role in the oxidative metabolism of xenobiotics. Catalyzes the N-hydroxylation of heterocyclic amines and the O-deethylation of phenacetin. Metabolizes caffeine via N3-demethylation. The chain is Cytochrome P450 1A2 (Cyp1a2) from Mus musculus (Mouse).